We begin with the raw amino-acid sequence, 1148 residues long: Minor outer capsid protein P2 (1148 aa).

The 219-residue stretch at Gln-930–Leu-1148 folds into the PPPDE domain. Catalysis depends on residues His-954 and Cys-1111.

The protein belongs to the phytoreovirus minor outer capsid protein P2 family.

It is found in the virion. The protein localises to the host cytoplasm. In terms of biological role, minor capsid protein present in the outer capsid, which is required for adsorption of the virus onto host insect cells. The polypeptide is Minor outer capsid protein P2 (Nephotettix cincticeps (Green rice leafhopper)).